The sequence spans 249 residues: Methylthioribulose-1-phosphate dehydratase (249 aa).

The interval 1–25 (MVDIKPEQTQEGNNNDHLVQSDDPE) is disordered. Over residues 9–18 (TQEGNNNDHL) the composition is skewed to polar residues. Cysteine 105 provides a ligand contact to substrate. Zn(2+) is bound by residues histidine 122 and histidine 124. The active-site Proton donor/acceptor is glutamate 151. Histidine 207 serves as a coordination point for Zn(2+).

Belongs to the aldolase class II family. MtnB subfamily. Zn(2+) serves as cofactor.

It localises to the cytoplasm. It carries out the reaction 5-(methylsulfanyl)-D-ribulose 1-phosphate = 5-methylsulfanyl-2,3-dioxopentyl phosphate + H2O. It functions in the pathway amino-acid biosynthesis; L-methionine biosynthesis via salvage pathway; L-methionine from S-methyl-5-thio-alpha-D-ribose 1-phosphate: step 2/6. Functionally, catalyzes the dehydration of methylthioribulose-1-phosphate (MTRu-1-P) into 2,3-diketo-5-methylthiopentyl-1-phosphate (DK-MTP-1-P). The polypeptide is Methylthioribulose-1-phosphate dehydratase (Arthroderma otae (strain ATCC MYA-4605 / CBS 113480) (Microsporum canis)).